Reading from the N-terminus, the 578-residue chain is DNA primase (578 aa).

The segment at 40-64 (CPFHQEKTPSFTVNFEKQFYFCFGC) adopts a CHC2-type zinc-finger fold. Positions 257-339 (KQILIVEGYV…GKNVKFIFLP (83 aa)) constitute a Toprim domain. 3 residues coordinate Mg(2+): glutamate 263, aspartate 307, and aspartate 309.

The protein belongs to the DnaG primase family. In terms of assembly, monomer. Interacts with DnaB. Zn(2+) serves as cofactor. It depends on Mg(2+) as a cofactor.

It carries out the reaction ssDNA + n NTP = ssDNA/pppN(pN)n-1 hybrid + (n-1) diphosphate.. In terms of biological role, RNA polymerase that catalyzes the synthesis of short RNA molecules used as primers for DNA polymerase during DNA replication. In Buchnera aphidicola subsp. Baizongia pistaciae (strain Bp), this protein is DNA primase.